Here is a 121-residue protein sequence, read N- to C-terminus: MNAHQEDTPPGPSTVFRPPTSSRPLETPHCREIRIGIAGITVTLSLCGCANARVPTLRSATADNSENTGFKNVPDLRTDQPKPPSKKRSCDPSEYRVSELKESLITTTPSRPRTARRCIRL.

Disordered regions lie at residues 1–28 (MNAHQEDTPPGPSTVFRPPTSSRPLETP) and 57–95 (LRSATADNSENTGFKNVPDLRTDQPKPPSKKRSCDPSEY). The span at 58–70 (RSATADNSENTGF) shows a compositional bias: polar residues.

It belongs to the gyrovirus apoptin family.

It is found in the host nucleus. Functionally, may act as transcriptional regulator. Induces apoptosis in infected cells. Element of infectious replication cycle. In Gallus gallus (Chicken), this protein is Apoptin (VP3).